The following is a 270-amino-acid chain: tRNA pseudouridine synthase A (270 aa).

Asp-51 functions as the Nucleophile in the catalytic mechanism. Residue Tyr-109 participates in substrate binding.

This sequence belongs to the tRNA pseudouridine synthase TruA family. In terms of assembly, homodimer.

It carries out the reaction uridine(38/39/40) in tRNA = pseudouridine(38/39/40) in tRNA. Its function is as follows. Formation of pseudouridine at positions 38, 39 and 40 in the anticodon stem and loop of transfer RNAs. This Burkholderia orbicola (strain MC0-3) protein is tRNA pseudouridine synthase A.